A 141-amino-acid chain; its full sequence is Guanyl-specific ribonuclease Sa3 (141 aa).

The or 43 signal peptide spans 1-36 (MRIPPRLVALAGAAAVAATLIAGPVAAAAPASHAVA). A disulfide bond links Cys52 and Cys141. The active-site Proton acceptor is Glu99. Residue His130 is the Proton donor of the active site.

The protein belongs to the ribonuclease N1/T1 family.

The protein resides in the secreted. The catalysed reaction is [RNA] containing guanosine + H2O = an [RNA fragment]-3'-guanosine-3'-phosphate + a 5'-hydroxy-ribonucleotide-3'-[RNA fragment].. The chain is Guanyl-specific ribonuclease Sa3 (rnaSA3) from Kitasatospora aureofaciens (Streptomyces aureofaciens).